The sequence spans 306 residues: Homoserine kinase (306 aa).

95-105 contributes to the ATP binding site; that stretch reads PQSRGLGSSAA.

Belongs to the GHMP kinase family. Homoserine kinase subfamily.

The protein resides in the cytoplasm. It catalyses the reaction L-homoserine + ATP = O-phospho-L-homoserine + ADP + H(+). The protein operates within amino-acid biosynthesis; L-threonine biosynthesis; L-threonine from L-aspartate: step 4/5. Functionally, catalyzes the ATP-dependent phosphorylation of L-homoserine to L-homoserine phosphate. The polypeptide is Homoserine kinase (Corynebacterium urealyticum (strain ATCC 43042 / DSM 7109)).